The primary structure comprises 145 residues: Ribosomal protein uL24-like (145 aa).

Disordered stretches follow at residues 1–21 (MKFN…HFNA) and 122–145 (KAKS…KMQE). Glycyl lysine isopeptide (Lys-Gly) (interchain with G-Cter in SUMO2) cross-links involve residues K136 and K142.

Belongs to the universal ribosomal protein uL24 family.

The sequence is that of Ribosomal protein uL24-like (RPL26L1) from Homo sapiens (Human).